The chain runs to 290 residues: MKVIVFLLVLLEMQRVIQNQPFPGTGELPMTRRPPKRELEYWCTYARSCDFCWNCRHGVCKNKVFEKHPLIKKNDYIQICRVSRYGEKCSYFTDSKIRRFHIMSCTNPTYYDWFDELMQVKEDRIIDVENIKHTCLCMVATIALMVYIRKQYSRMRMQAATRLLIFLGIYLLLGILMTNIIMNLPLSTDNPMQMRRPPKEDLKFWCTYAKHCDFCWTCKDGMCKNKVFSDHPIITQNDYIVNCTVSRWHDRCMYEAHFRIHYQHNMNCSQPKDLEWFIELKRHVINQDDL.

A run of 3 helical transmembrane segments spans residues methionine 1 to asparagine 19, valine 128 to isoleucine 148, and leucine 163 to asparagine 183. Residues asparagine 242 and asparagine 267 are each glycosylated (N-linked (GlcNAc...) asparagine; by host).

It belongs to the asfivirus MGF 110 family.

The protein resides in the host membrane. Functionally, plays a role in virus cell tropism, and may be required for efficient virus replication in macrophages. The polypeptide is Protein MGF 110-9L (Ornithodoros (relapsing fever ticks)).